The primary structure comprises 220 residues: Probable GTP-binding protein EngB (220 aa).

In terms of domain architecture, EngB-type G spans 24-207 (PQPEVAFAGR…HELIESWIAP (184 aa)). Residues 32 to 39 (GRSNAGKS), 59 to 63 (GRTQH), 81 to 84 (DLPG), 148 to 151 (TKCD), and 185 to 188 (LFSA) each bind GTP. Residues Ser-39 and Thr-61 each contribute to the Mg(2+) site.

The protein belongs to the TRAFAC class TrmE-Era-EngA-EngB-Septin-like GTPase superfamily. EngB GTPase family. Requires Mg(2+) as cofactor.

Its function is as follows. Necessary for normal cell division and for the maintenance of normal septation. The polypeptide is Probable GTP-binding protein EngB (Paraburkholderia phymatum (strain DSM 17167 / CIP 108236 / LMG 21445 / STM815) (Burkholderia phymatum)).